The chain runs to 977 residues: Ephrin type-A receptor 2 (977 aa).

Residues 1–25 (MELRAVGFCLALLWGCALAAAAAQG) form the signal peptide. Residues 1-205 (MELRAVGFCL…YYKKCPEMLQ (205 aa)) are mediates interaction with CLDN4. The Extracellular portion of the chain corresponds to 26–538 (KEVVLLDFAA…STEGSANMAV (513 aa)). The region spanning 27-205 (EVVLLDFAAM…YYKKCPEMLQ (179 aa)) is the Eph LBD domain. 2 disulfide bridges follow: C69–C187 and C104–C114. Positions 329–433 (PPSAPNYLTA…TSRSFRTASV (105 aa)) constitute a Fibronectin type-III 1 domain. N-linked (GlcNAc...) asparagine glycosylation is found at N408 and N436. Residues 439-530 (EPPKVRLEDR…KVHEFQTLST (92 aa)) form the Fibronectin type-III 2 domain. The helical transmembrane segment at 539 to 559 (IGGVAVGVVLLLVLAGVGLFI) threads the bilayer. Topologically, residues 560 to 977 (HRRRRNLRAR…DQVNTVGIPI (418 aa)) are cytoplasmic. Phosphoserine occurs at positions 571 and 580. Phosphotyrosine; by autocatalysis occurs at positions 589 and 595. The interval 607-907 (TEIHPSCVAR…STSGSEGVPF (301 aa)) is mediates interaction with ARHGEF16. Positions 614–876 (VARQKVIGAG…DIVSILDKLI (263 aa)) constitute a Protein kinase domain. 620 to 628 (IGAGEFGEV) serves as a coordination point for ATP. Residue Y629 is modified to Phosphotyrosine. K647 serves as a coordination point for ATP. T648 is subject to Phosphothreonine. Position 736 is a phosphotyrosine; by autocatalysis (Y736). Catalysis depends on D740, which acts as the Proton acceptor. Y773 is modified (phosphotyrosine; by autocatalysis). 4 positions are modified to phosphoserine: S870, S893, S898, and S902. The interval 887-977 (DFDPRVSIRL…DQVNTVGIPI (91 aa)) is negatively regulates interaction with ARHGEF16. Positions 905–969 (VPFRTVSEWL…AYSLLGLKDQ (65 aa)) constitute an SAM domain. At Y922 the chain carries Phosphotyrosine; by autocatalysis. The residue at position 931 (Y931) is a Phosphotyrosine. The PDZ-binding motif lies at 975–977 (IPI).

Belongs to the protein kinase superfamily. Tyr protein kinase family. Ephrin receptor subfamily. As to quaternary structure, homodimer. Interacts with INPPL1; regulates activated EPHA2 endocytosis and degradation. Interacts (inactivated form) with PTK2/FAK1 and interacts (EFNA1 ligand-activated form) with PTPN11; regulates integrin-mediated adhesion. Interacts with ARHGEF16, DOCK4 and ELMO2; mediates ligand-independent activation of RAC1 which stimulates cell migration. Interacts with CLDN4; phosphorylates CLDN4 and may regulate tight junctions. Interacts with ACP1. Interacts with CEMIP. Interacts with NCK1; may regulate EPHA2 activity in cell migration and adhesion. Interacts with SLA. Interacts (phosphorylated form) with VAV2, VAV3 and PI3-kinase p85 subunit (PIK3R1, PIK3R2 or PIK3R3); critical for the EFNA1-induced activation of RAC1 which stimulates cell migration. Interacts with ANKS1A. Interacts with TIMD4. Autophosphorylates. Phosphorylated at Ser-898 by PKB; serum-induced phosphorylation which targets EPHA2 to the cell leading edge and stimulates cell migration. Phosphorylation by PKB is inhibited by EFNA1-activated EPHA2 which regulates PKB activity via a reciprocal regulatory loop. Phosphorylated on tyrosine upon binding and activation by EFNA1. Phosphorylated residues Tyr-589 and Tyr-595 are required for binding VAV2 and VAV3 while phosphorylated residues Tyr-736 and Tyr-931 are required for binding PI3-kinase p85 subunit (PIK3R1, PIK3R2 or PIK3R3). These phosphorylated residues are critical for recruitment of VAV2 and VAV3 and PI3-kinase p85 subunit which transduce downstream signaling to activate RAC1 GTPase and cell migration. Dephosphorylation of Tyr-931 by PTPRF prevents the interaction of EPHA2 with NCK1. Phosphorylated at Ser-898 in response to TNF by RPS6KA1 and RPS6KA3; RPS6KA-EPHA2 signaling pathway controls cell migration. Phosphorylated at Ser-898 by PKA; blocks cell retraction induced by EPHA2 kinase activity. Dephosphorylated by ACP1. In terms of processing, ubiquitinated by CHIP/STUB1. Ubiquitination is regulated by the HSP90 chaperone and regulates the receptor stability and activity through proteasomal degradation. ANKS1A prevents ubiquitination and degradation. In terms of tissue distribution, expressed in the lung, intestine and liver. Expressed in myogenic progenitor cells.

The protein localises to the cell membrane. Its subcellular location is the cell projection. The protein resides in the ruffle membrane. It is found in the lamellipodium membrane. It localises to the cell junction. The protein localises to the focal adhesion. It catalyses the reaction L-tyrosyl-[protein] + ATP = O-phospho-L-tyrosyl-[protein] + ADP + H(+). Functionally, receptor tyrosine kinase which binds promiscuously membrane-bound ephrin-A family ligands residing on adjacent cells, leading to contact-dependent bidirectional signaling into neighboring cells. The signaling pathway downstream of the receptor is referred to as forward signaling while the signaling pathway downstream of the ephrin ligand is referred to as reverse signaling. Activated by the ligand ephrin-A1/EFNA1 regulates migration, integrin-mediated adhesion, proliferation and differentiation of cells. Regulates cell adhesion and differentiation through DSG1/desmoglein-1 and inhibition of the ERK1/ERK2 signaling pathway. May also participate in UV radiation-induced apoptosis and have a ligand-independent stimulatory effect on chemotactic cell migration. During development, may function in distinctive aspects of pattern formation and subsequently in development of several fetal tissues. Involved for instance in angiogenesis, in early hindbrain development and epithelial proliferation and branching morphogenesis during mammary gland development. Engaged by the ligand ephrin-A5/EFNA5 may regulate lens fiber cells shape and interactions and be important for lens transparency development and maintenance. With ephrin-A2/EFNA2 may play a role in bone remodeling through regulation of osteoclastogenesis and osteoblastogenesis. This is Ephrin type-A receptor 2 (Epha2) from Mus musculus (Mouse).